Reading from the N-terminus, the 507-residue chain is Transcription factor SOX-9 (507 aa).

Disordered regions lie at residues 1–67 and 160–250; these read MNLL…SEED and RLRV…AGKV. Over residues 30–41 the composition is skewed to low complexity; sequence SAGSPCPSGSGS. The segment covering 42–52 has biased composition (polar residues); the sequence is DTENTRPQENT. Composition is skewed to basic and acidic residues over residues 56–67 and 160–174; these read GEPDLKKESEED and RLRV…DYKY. Positions 63 to 103 are dimerization (DIM); it reads ESEEDKFPVCIREAVSQVLKGYDWTLVPMPVRVNGSSKNKP. The tract at residues 63 to 103 is PQA; that stretch reads ESEEDKFPVCIREAVSQVLKGYDWTLVPMPVRVNGSSKNKP. Phosphoserine; by PKA is present on Ser64. A DNA-binding region (HMG box) is located at residues 105-173; the sequence is VKRPMNAFMV…QHKKDHPDYK (69 aa). The residue at position 211 (Ser211) is a Phosphoserine; by PKA. Residues 224–307 form a transactivation domain (TAM) region; that stretch reads PGEHSGQSQG…LPPNGHPGVP (84 aa). Short sequence motifs (9aaTAD) lie at residues 275-284 and 290-298; these read IGELSSDVIS and DVNEFDQYL. Positions 335–429 are disordered; sequence WMSKQQAPPP…PFNLPHYSPS (95 aa). A compositionally biased stretch (pro residues) spans 341 to 369; it reads APPPPPQQPPQAPQAPQAPPQQQAPPQQP. A compositionally biased stretch (polar residues) spans 378–420; it reads HTLTTLSSEPGQSQRTHIKTEQLSPSHYSEQQQHSPQQISYSP. Residues 392–507 are transactivation domain (TAC); it reads RTHIKTEQLS…QPVYTQLTRP (116 aa). Lys396 participates in a covalent cross-link: Glycyl lysine isopeptide (Lys-Gly) (interchain with G-Cter in ubiquitin). Residues 458-466 carry the 9aaTAD 3 motif; the sequence is SGLYSTFTY. The disordered stretch occupies residues 477–507; the sequence is PIADTSGVPSIPQTHSPQHWEQPVYTQLTRP. Residues 483-507 show a composition bias toward polar residues; that stretch reads GVPSIPQTHSPQHWEQPVYTQLTRP.

In terms of assembly, homodimer; homodimerization is required for activity. Interacts (via C-terminus) with ZNF219; forming a complex that binds to the COL2A1 promoter and activates COL2A1 expression. Interacts with DDRGK1. Interacts with EP300/p300. Interacts with beta-catenin (CTNNB1); inhibiting CTNNB1 activity by competing with the binding sites of TCF/LEF within CTNNB1. Post-translationally, acetylated; acetylation impairs nuclear localization and ability to transactivate expression of target genes. Deacetylated by SIRT1. In terms of processing, phosphorylation at Ser-64 and Ser-211 by PKA increases transcriptional activity and may help delay chondrocyte maturation downstream of PTHLH/PTHrP signaling. Phosphorylation at either Ser-64 or Ser-211 is required for sumoylation, but phosphorylation is not dependent on sumoylation. Phosphorylated on tyrosine residues; tyrosine dephosphorylation by PTPN11/SHP2 blocks SOX9 phosphorylation by PKA and subsequent SUMOylation. Sumoylated; phosphorylation at either Ser-64 or Ser-211 is required for sumoylation. Sumoylation is induced by BMP signaling pathway. Post-translationally, ubiquitinated; ubiquitination leads to proteasomal degradation and is negatively regulated by DDRGK1. As to expression, expressed in the intestinal epithelium (at protein level). Expressed in progenitor cells in various organs, including chondroprogenitors, osteoprogenitors and preadipocytes, but is not expressed in most differentiated cell types such as osteoblasts and adipocytes, with the exception of chondrocytes. Highly expressed in developing chondrogenic tissues. Also expressed in some non-chondrogenic tissues such as notochord, otic vesicle and neural tube.

The protein localises to the nucleus. Functionally, transcription factor that plays a key role in chondrocytes differentiation and skeletal development. Specifically binds the 5'-ACAAAG-3' DNA motif present in enhancers and super-enhancers and promotes expression of genes important for chondrogenesis, including cartilage matrix protein-coding genes COL2A1, COL4A2, COL9A1, COL11A2 and ACAN, SOX5 and SOX6. Also binds to some promoter regions. Plays a central role in successive steps of chondrocyte differentiation. Absolutely required for precartilaginous condensation, the first step in chondrogenesis during which skeletal progenitors differentiate into prechondrocytes. Together with SOX5 and SOX6, required for overt chondrogenesis when condensed prechondrocytes differentiate into early stage chondrocytes, the second step in chondrogenesis. Later, required to direct hypertrophic maturation and block osteoblast differentiation of growth plate chondrocytes: maintains chondrocyte columnar proliferation, delays prehypertrophy and then prevents osteoblastic differentiation of chondrocytes by lowering beta-catenin (CTNNB1) signaling and RUNX2 expression. Also required for chondrocyte hypertrophy, both indirectly, by keeping the lineage fate of chondrocytes, and directly, by remaining present in upper hypertrophic cells and transactivating COL10A1 along with MEF2C. Low lipid levels are the main nutritional determinant for chondrogenic commitment of skeletal progenitor cells: when lipids levels are low, FOXO (FOXO1 and FOXO3) transcription factors promote expression of SOX9, which induces chondrogenic commitment and suppresses fatty acid oxidation. Mechanistically, helps, but is not required, to remove epigenetic signatures of transcriptional repression and deposit active promoter and enhancer marks at chondrocyte-specific genes. Acts in cooperation with the Hedgehog pathway-dependent GLI (GLI1 and GLI3) transcription factors. In addition to cartilage development, also acts as a regulator of proliferation and differentiation in epithelial stem/progenitor cells: involved in the lung epithelium during branching morphogenesis, by balancing proliferation and differentiation and regulating the extracellular matrix. Controls epithelial branching during kidney development. The chain is Transcription factor SOX-9 from Mus musculus (Mouse).